The primary structure comprises 1394 residues: DNA-directed RNA polymerase subunit beta' (1394 aa).

The Zn(2+) site is built by Cys71, Cys73, Cys86, and Cys89. Residues Asp462, Asp464, and Asp466 each contribute to the Mg(2+) site. Residues Cys811, Cys885, Cys892, and Cys895 each coordinate Zn(2+).

It belongs to the RNA polymerase beta' chain family. As to quaternary structure, the RNAP catalytic core consists of 2 alpha, 1 beta, 1 beta' and 1 omega subunit. When a sigma factor is associated with the core the holoenzyme is formed, which can initiate transcription. It depends on Mg(2+) as a cofactor. Zn(2+) is required as a cofactor.

The enzyme catalyses RNA(n) + a ribonucleoside 5'-triphosphate = RNA(n+1) + diphosphate. Functionally, DNA-dependent RNA polymerase catalyzes the transcription of DNA into RNA using the four ribonucleoside triphosphates as substrates. This is DNA-directed RNA polymerase subunit beta' from Xanthobacter autotrophicus (strain ATCC BAA-1158 / Py2).